Consider the following 379-residue polypeptide: Succinyl-diaminopimelate desuccinylase (379 aa).

H68 serves as a coordination point for Zn(2+). D70 is an active-site residue. Zn(2+) is bound at residue D101. The active-site Proton acceptor is the E135. The Zn(2+) site is built by E136, E164, and H350.

This sequence belongs to the peptidase M20A family. DapE subfamily. Homodimer. It depends on Zn(2+) as a cofactor. The cofactor is Co(2+).

It catalyses the reaction N-succinyl-(2S,6S)-2,6-diaminopimelate + H2O = (2S,6S)-2,6-diaminopimelate + succinate. Its pathway is amino-acid biosynthesis; L-lysine biosynthesis via DAP pathway; LL-2,6-diaminopimelate from (S)-tetrahydrodipicolinate (succinylase route): step 3/3. Functionally, catalyzes the hydrolysis of N-succinyl-L,L-diaminopimelic acid (SDAP), forming succinate and LL-2,6-diaminopimelate (DAP), an intermediate involved in the bacterial biosynthesis of lysine and meso-diaminopimelic acid, an essential component of bacterial cell walls. This is Succinyl-diaminopimelate desuccinylase from Bordetella parapertussis (strain 12822 / ATCC BAA-587 / NCTC 13253).